We begin with the raw amino-acid sequence, 1193 residues long: Pyruvate carboxylase (1193 aa).

The 453-residue stretch at 41–493 folds into the Biotin carboxylation domain; the sequence is QFQKILVANR…WTTFIDDTPE (453 aa). ATP is bound by residues Lys159, Glu243, and His278. An ATP-grasp domain is found at 163 to 360; the sequence is RQLAIRCNVP…IVAAQIQIAA (198 aa). Arg335 is a catalytic residue. Positions 579–847 constitute a Pyruvate carboxyltransferase domain; it reads CLIMDTTWRD…DPGLNSAHVR (269 aa). Residues 587 to 591 and Arg660 each bind substrate; that span reads RDAHQ. Asp588 contributes to the a divalent metal cation binding site. Residues Lys756, His786, and His788 each coordinate a divalent metal cation. Lys756 bears the N6-carboxylysine mark. Thr921 contributes to the substrate binding site. The 76-residue stretch at 1116–1191 folds into the Biotinyl-binding domain; it reads KADVGDSSQV…DGQDLVCKIT (76 aa). At Lys1157 the chain carries N6-biotinyllysine.

Biotin serves as cofactor. Requires Zn(2+) as cofactor.

The protein localises to the cytoplasm. The catalysed reaction is hydrogencarbonate + pyruvate + ATP = oxaloacetate + ADP + phosphate + H(+). Its pathway is carbohydrate biosynthesis; gluconeogenesis. In terms of biological role, pyruvate carboxylase catalyzes a 2-step reaction, involving the ATP-dependent carboxylation of the covalently attached biotin in the first step and the transfer of the carboxyl group to pyruvate in the second. This chain is Pyruvate carboxylase (pyc), found in Aspergillus terreus.